We begin with the raw amino-acid sequence, 140 residues long: Putative nickel-responsive regulator (140 aa).

The Ni(2+) site is built by H81, H92, H94, and C100.

It belongs to the transcriptional regulatory CopG/NikR family. It depends on Ni(2+) as a cofactor.

In terms of biological role, transcriptional regulator. This is Putative nickel-responsive regulator from Methanothrix thermoacetophila (strain DSM 6194 / JCM 14653 / NBRC 101360 / PT) (Methanosaeta thermophila).